A 518-amino-acid chain; its full sequence is Bifunctional methyltransferase (518 aa).

The hemK stretch occupies residues 1–300; it reads MQYSIKQILS…SHNRVIEISP (300 aa). Residues 1–302 are RF MTase; that stretch reads MQYSIKQILS…NRVIEISPIN (302 aa). S-adenosyl-L-methionine contacts are provided by residues 140–144, Asp-163, Trp-192, Asn-207, Glu-347, Glu-372, Asn-399, and Asp-421; that span reads GTGSG. 207 to 210 is a binding site for substrate; it reads NPPY. The interval 301 to 518 is tRNA (guanine-N(7)-)-methyltransferase; the sequence is INLNRSYARR…MILQHALTDH (218 aa). The segment at 305 to 518 is tRNA MTase; it reads RSYARRIGKS…MILQHALTDH (214 aa). Residue Asp-421 is part of the active site. The substrate site is built by Lys-425 and Asp-457.

This sequence in the C-terminal section; belongs to the class I-like SAM-binding methyltransferase superfamily. TrmB family. It in the N-terminal section; belongs to the protein N5-glutamine methyltransferase family. PrmC subfamily.

It carries out the reaction L-glutaminyl-[peptide chain release factor] + S-adenosyl-L-methionine = N(5)-methyl-L-glutaminyl-[peptide chain release factor] + S-adenosyl-L-homocysteine + H(+). The enzyme catalyses guanosine(46) in tRNA + S-adenosyl-L-methionine = N(7)-methylguanosine(46) in tRNA + S-adenosyl-L-homocysteine. Its function is as follows. Methylates the class 1 translation termination release factors RF1/PrfA and RF2/PrfB on the glutamine residue of the universally conserved GGQ motif. Catalyzes the formation of N(7)-methylguanine at position 46 (m7G46) in tRNA. In Rickettsia prowazekii (strain Madrid E), this protein is Bifunctional methyltransferase (prmC/trmB).